The sequence spans 59 residues: Large ribosomal subunit protein uL30 (59 aa).

This sequence belongs to the universal ribosomal protein uL30 family. In terms of assembly, part of the 50S ribosomal subunit.

This Citrobacter koseri (strain ATCC BAA-895 / CDC 4225-83 / SGSC4696) protein is Large ribosomal subunit protein uL30.